A 341-amino-acid polypeptide reads, in one-letter code: Heme A synthase (341 aa).

The next 5 membrane-spanning stretches (helical) occupy residues 11 to 31, 101 to 121, 127 to 147, 160 to 180, and 194 to 214; these read AVST…IIGG, LIGL…HLSA, LFGL…MVAS, LATH…FSLE, and AGVT…GAFV. H259 is a heme binding site. Helical transmembrane passes span 261–278, 288–308, and 315–335; these read WTGY…WQVW, FMVI…AALL, and LSLA…AAAW. H319 is a binding site for heme.

This sequence belongs to the COX15/CtaA family. Type 2 subfamily. In terms of assembly, interacts with CtaB. Requires heme b as cofactor.

The protein resides in the cell membrane. It catalyses the reaction Fe(II)-heme o + 2 A + H2O = Fe(II)-heme a + 2 AH2. It functions in the pathway porphyrin-containing compound metabolism; heme A biosynthesis; heme A from heme O: step 1/1. Its function is as follows. Catalyzes the conversion of heme O to heme A by two successive hydroxylations of the methyl group at C8. The first hydroxylation forms heme I, the second hydroxylation results in an unstable dihydroxymethyl group, which spontaneously dehydrates, resulting in the formyl group of heme A. The polypeptide is Heme A synthase (Maricaulis maris (strain MCS10) (Caulobacter maris)).